Consider the following 284-residue polypeptide: Pantothenate synthetase (284 aa).

30–37 (MGNLHDGH) provides a ligand contact to ATP. The Proton donor role is filled by His37. Position 61 (Gln61) interacts with (R)-pantoate. Beta-alanine is bound at residue Gln61. 149-152 (GEKD) provides a ligand contact to ATP. (R)-pantoate is bound at residue Gln155. Residues Val178 and 186-189 (LSSR) contribute to the ATP site.

The protein belongs to the pantothenate synthetase family. As to quaternary structure, homodimer.

The protein localises to the cytoplasm. The catalysed reaction is (R)-pantoate + beta-alanine + ATP = (R)-pantothenate + AMP + diphosphate + H(+). It participates in cofactor biosynthesis; (R)-pantothenate biosynthesis; (R)-pantothenate from (R)-pantoate and beta-alanine: step 1/1. In terms of biological role, catalyzes the condensation of pantoate with beta-alanine in an ATP-dependent reaction via a pantoyl-adenylate intermediate. In Enterobacter sp. (strain 638), this protein is Pantothenate synthetase.